A 373-amino-acid polypeptide reads, in one-letter code: 5-amino-6-(5-phospho-D-ribitylamino)uracil phosphatase, chloroplastic (373 aa).

It belongs to the HAD-like hydrolase superfamily. DOG/GPP family. Homodimer. Requires Mg(2+) as cofactor.

Its subcellular location is the plastid. It localises to the chloroplast. The enzyme catalyses 5-amino-6-(5-phospho-D-ribitylamino)uracil + H2O = 5-amino-6-(D-ribitylamino)uracil + phosphate. In terms of biological role, catalyzes the dephosphorylation of 5-amino-6-(5-phospho-D-ribitylamino)uracil, also known as ARPP, but has no activity toward flavin mononucleotide (FMN). This is 5-amino-6-(5-phospho-D-ribitylamino)uracil phosphatase, chloroplastic from Arabidopsis thaliana (Mouse-ear cress).